A 1219-amino-acid chain; its full sequence is Type IV pilus biogenesis factor PilY1 homolog PD_0502 (1219 aa).

A signal peptide spans 1–35; sequence MVGMSRIILNNLFFFRCVVAVFSAHSLVISGAVHA. Residues 212–234 form a disordered region; sequence GLSTDPLNTEGQPYDPSRHPLNS. Residues glutamine 958, asparagine 960, isoleucine 962, and aspartate 964 each coordinate Ca(2+).

Belongs to the PilY1 family.

The protein localises to the fimbrium. One of the three PilY1 homologs of X.fastidiosa, which are involved in bacterial twitching motility as component of the filamentous type IV pili (T4P). The protein is Type IV pilus biogenesis factor PilY1 homolog PD_0502 of Xylella fastidiosa (strain Temecula1 / ATCC 700964).